Here is a 711-residue protein sequence, read N- to C-terminus: Arginine decarboxylase 2 (711 aa).

An N6-(pyridoxal phosphate)lysine modification is found at Lys147. 331–341 (IDIGGGLGIDY) contacts substrate. A disordered region spans residues 642–661 (MHTKGGSEGENEEEEEDDEF). Acidic residues predominate over residues 650-661 (GENEEEEEDDEF).

The protein belongs to the Orn/Lys/Arg decarboxylase class-II family. SpeA subfamily. Homodimer and heterodimer with ADC1. Pyridoxal 5'-phosphate is required as a cofactor. It depends on Mg(2+) as a cofactor.

The protein resides in the plastid. It localises to the chloroplast. The protein localises to the cytoplasm. It is found in the cytosol. The catalysed reaction is L-arginine + H(+) = agmatine + CO2. It functions in the pathway amine and polyamine biosynthesis; agmatine biosynthesis; agmatine from L-arginine: step 1/1. Its function is as follows. Required for the biosynthesis of putrescine. Catalyzes the first step of polyamine (PA) biosynthesis to produce putrescine from arginine. Is a major contributor to basal arginine decarboxylase (ADC) activity and putrescine biosynthesis. Accumulation of putrescine plays a positive role in salt stress tolerance. Accumulation of putrescine plays a positive role in freezing tolerance. Production of PA is essential for normal seed development. Controls PA homeostasis which is crucial for normal plant growth and development. This chain is Arginine decarboxylase 2, found in Arabidopsis thaliana (Mouse-ear cress).